We begin with the raw amino-acid sequence, 151 residues long: UPF0178 protein PSHAb0045 (151 aa).

The protein belongs to the UPF0178 family.

The sequence is that of UPF0178 protein PSHAb0045 from Pseudoalteromonas translucida (strain TAC 125).